Here is a 255-residue protein sequence, read N- to C-terminus: uncharacterized protein (255 aa).

This is an uncharacterized protein from Pseudomonas chlororaphis (Pseudomonas aureofaciens).